The primary structure comprises 224 residues: Homeobox protein Hox-B6 (224 aa).

Positions 127 to 132 match the Antp-type hexapeptide motif; sequence VYPWMQ. Residues 146–205 constitute a DNA-binding region (homeobox); that stretch reads GRRGRQTYTRYQTLELEKEFHYNRYLTRRRRIEIAHALCLTERQIKIWFQNRRMKWKKES. A Phosphoserine modification is found at S214.

The protein belongs to the Antp homeobox family.

The protein resides in the nucleus. Functionally, sequence-specific transcription factor which is part of a developmental regulatory system that provides cells with specific positional identities on the anterior-posterior axis. This Mus musculus (Mouse) protein is Homeobox protein Hox-B6 (Hoxb6).